A 145-amino-acid chain; its full sequence is 3-hydroxyacyl-[acyl-carrier-protein] dehydratase FabZ (145 aa).

Residue His-49 is part of the active site.

Belongs to the thioester dehydratase family. FabZ subfamily.

It localises to the cytoplasm. The enzyme catalyses a (3R)-hydroxyacyl-[ACP] = a (2E)-enoyl-[ACP] + H2O. Involved in unsaturated fatty acids biosynthesis. Catalyzes the dehydration of short chain beta-hydroxyacyl-ACPs and long chain saturated and unsaturated beta-hydroxyacyl-ACPs. The polypeptide is 3-hydroxyacyl-[acyl-carrier-protein] dehydratase FabZ (Rickettsia massiliae (strain Mtu5)).